The primary structure comprises 119 residues: Large ribosomal subunit protein uL18 (119 aa).

The protein belongs to the universal ribosomal protein uL18 family. Part of the 50S ribosomal subunit; part of the 5S rRNA/L5/L18/L25 subcomplex. Contacts the 5S and 23S rRNAs.

This is one of the proteins that bind and probably mediate the attachment of the 5S RNA into the large ribosomal subunit, where it forms part of the central protuberance. The chain is Large ribosomal subunit protein uL18 from Clostridium perfringens (strain 13 / Type A).